The chain runs to 278 residues: ADP-dependent (S)-NAD(P)H-hydrate dehydratase (278 aa).

The YjeF C-terminal domain maps to 4–276; it reads DDDLVRQVIR…KAIPSWMKKL (273 aa). 3 residues coordinate (6S)-NADPHX: A39, G102, and H152. G216 contacts AMP. D217 is a (6S)-NADPHX binding site.

This sequence belongs to the NnrD/CARKD family. As to quaternary structure, homotetramer. It depends on Mg(2+) as a cofactor.

The catalysed reaction is (6S)-NADHX + ADP = AMP + phosphate + NADH + H(+). It carries out the reaction (6S)-NADPHX + ADP = AMP + phosphate + NADPH + H(+). Functionally, catalyzes the dehydration of the S-form of NAD(P)HX at the expense of ADP, which is converted to AMP. Together with NAD(P)HX epimerase, which catalyzes the epimerization of the S- and R-forms, the enzyme allows the repair of both epimers of NAD(P)HX, a damaged form of NAD(P)H that is a result of enzymatic or heat-dependent hydration. The sequence is that of ADP-dependent (S)-NAD(P)H-hydrate dehydratase from Streptococcus thermophilus.